Consider the following 432-residue polypeptide: Adenylosuccinate synthetase (432 aa).

GTP-binding positions include 12-18 and 40-42; these read GDEGKGK and GHT. The Proton acceptor role is filled by Asp-13. Mg(2+)-binding residues include Asp-13 and Gly-40. Residues 13–16, 38–41, Thr-130, Arg-144, Gln-225, Thr-240, and Arg-304 each bind IMP; these read DEGK and NAGH. His-41 serves as the catalytic Proton donor. A substrate-binding site is contributed by 300 to 306; the sequence is ATTGRPR. Residues Arg-306, 332-334, and 414-416 each bind GTP; these read KLD and SVG.

The protein belongs to the adenylosuccinate synthetase family. In terms of assembly, homodimer. It depends on Mg(2+) as a cofactor.

It is found in the cytoplasm. It catalyses the reaction IMP + L-aspartate + GTP = N(6)-(1,2-dicarboxyethyl)-AMP + GDP + phosphate + 2 H(+). The protein operates within purine metabolism; AMP biosynthesis via de novo pathway; AMP from IMP: step 1/2. Functionally, plays an important role in the de novo pathway of purine nucleotide biosynthesis. Catalyzes the first committed step in the biosynthesis of AMP from IMP. This Anaeromyxobacter dehalogenans (strain 2CP-C) protein is Adenylosuccinate synthetase.